The chain runs to 122 residues: ILMDSPEDADLYHSEEIKAPEKEEFLAWQHDLEVNDKASAQARPTVFRWTGGGKEVYLSGSFNNWSKLPLTRSHNNFVAILDLPEGEHQYKFLVDGQWTHDPSEPVVTSQLGTVNNIIQVKK.

Phosphoserine is present on residues S5, S61, S66, and S73. A glycogen-binding domain region spans residues 33 to 122 (EVNDKASAQA…TVNNIIQVKK (90 aa)). T113 is subject to Phosphothreonine.

It belongs to the 5'-AMP-activated protein kinase beta subunit family. In terms of assembly, AMPK is a heterotrimer of an alpha catalytic subunit (PRKAA1 or PRKAA2), a beta (PRKAB1 or PRKAB2) and a gamma non-catalytic subunits (PRKAG1, PRKAG2 or PRKAG3). Interacts with FNIP1 and FNIP2. Post-translationally, phosphorylated when associated with the catalytic subunit (PRKAA1 or PRKAA2). Phosphorylated by ULK1; leading to negatively regulate AMPK activity and suggesting the existence of a regulatory feedback loop between ULK1 and AMPK.

Non-catalytic subunit of AMP-activated protein kinase (AMPK), an energy sensor protein kinase that plays a key role in regulating cellular energy metabolism. In response to reduction of intracellular ATP levels, AMPK activates energy-producing pathways and inhibits energy-consuming processes: inhibits protein, carbohydrate and lipid biosynthesis, as well as cell growth and proliferation. AMPK acts via direct phosphorylation of metabolic enzymes, and by longer-term effects via phosphorylation of transcription regulators. Also acts as a regulator of cellular polarity by remodeling the actin cytoskeleton; probably by indirectly activating myosin. Beta non-catalytic subunit acts as a scaffold on which the AMPK complex assembles, via its C-terminus that bridges alpha (PRKAA1 or PRKAA2) and gamma subunits (PRKAG1, PRKAG2 or PRKAG3). In Sus scrofa (Pig), this protein is 5'-AMP-activated protein kinase subunit beta-1 (PRKAB1).